Here is a 116-residue protein sequence, read N- to C-terminus: Thioredoxin H-type (116 aa).

One can recognise a Thioredoxin domain in the interval 2 to 115; it reads AEEAQVIACH…HKIAVHAPIT (114 aa). Active-site nucleophile residues include Cys-39 and Cys-42. The cysteines at positions 39 and 42 are disulfide-linked.

The protein belongs to the thioredoxin family. Plant H-type subfamily.

It localises to the cytoplasm. Functionally, participates in various redox reactions through the reversible oxidation of the active center dithiol to a disulfide. The H form is known to activate a number of cytosolic enzymes. The polypeptide is Thioredoxin H-type (Fagopyrum esculentum (Common buckwheat)).